We begin with the raw amino-acid sequence, 64 residues long: Large ribosomal subunit protein bL35 (64 aa).

This sequence belongs to the bacterial ribosomal protein bL35 family.

This is Large ribosomal subunit protein bL35 from Desulforamulus reducens (strain ATCC BAA-1160 / DSM 100696 / MI-1) (Desulfotomaculum reducens).